A 230-amino-acid chain; its full sequence is Heptaprenylglyceryl phosphate synthase (230 aa).

Position 12 (K12) interacts with sn-glycerol 1-phosphate. Residues D14 and T40 each contribute to the Mg(2+) site. Residues 159–164 (YVEYSG), G189, and 209–210 (GD) contribute to the sn-glycerol 1-phosphate site.

The protein belongs to the GGGP/HepGP synthase family. Group I subfamily. In terms of assembly, homodimer. Requires Mg(2+) as cofactor.

The enzyme catalyses sn-glycerol 1-phosphate + all-trans-heptaprenyl diphosphate = 3-heptaprenyl-sn-glycero-1-phosphate + diphosphate. It participates in membrane lipid metabolism; glycerophospholipid metabolism. Its function is as follows. Prenyltransferase that catalyzes in vivo the transfer of the heptaprenyl moiety of heptaprenyl pyrophosphate (HepPP; 35 carbon atoms) to the C3 hydroxyl of sn-glycerol-1-phosphate (G1P), producing heptaprenylglyceryl phosphate (HepGP). This reaction is an ether-bond-formation step in the biosynthesis of archaea-type G1P-based membrane lipids found in Bacillales. The polypeptide is Heptaprenylglyceryl phosphate synthase (Staphylococcus epidermidis (strain ATCC 35984 / DSM 28319 / BCRC 17069 / CCUG 31568 / BM 3577 / RP62A)).